The following is a 249-amino-acid chain: Uridylate kinase (249 aa).

19 to 22 contributes to the ATP binding site; that stretch reads KLSG. G61 provides a ligand contact to UMP. G62 and R66 together coordinate ATP. Residues D81 and 142–149 contribute to the UMP site; that span reads TGNPYFTT. Positions 169, 175, and 178 each coordinate ATP.

It belongs to the UMP kinase family. Homohexamer.

It is found in the cytoplasm. It carries out the reaction UMP + ATP = UDP + ADP. It participates in pyrimidine metabolism; CTP biosynthesis via de novo pathway; UDP from UMP (UMPK route): step 1/1. Inhibited by UTP. Its function is as follows. Catalyzes the reversible phosphorylation of UMP to UDP. The chain is Uridylate kinase from Anaeromyxobacter sp. (strain Fw109-5).